Reading from the N-terminus, the 144-residue chain is Putative sugar phosphate isomerase RC0402 (144 aa).

His-12 lines the substrate pocket. Residue His-101 is the Proton donor of the active site. Substrate is bound at residue Arg-135.

Belongs to the LacAB/RpiB family.

This is Putative sugar phosphate isomerase RC0402 from Rickettsia conorii (strain ATCC VR-613 / Malish 7).